The sequence spans 134 residues: Large ribosomal subunit protein eL32 (134 aa).

This sequence belongs to the eukaryotic ribosomal protein eL32 family.

This is Large ribosomal subunit protein eL32 (RPL32) from Tetrahymena thermophila (strain SB210).